We begin with the raw amino-acid sequence, 500 residues long: Glycerol kinase (500 aa).

ADP is bound at residue T12. Residues T12, T13, and S14 each coordinate ATP. T12 lines the sn-glycerol 3-phosphate pocket. R16 lines the ADP pocket. R82, E83, Y134, and D246 together coordinate sn-glycerol 3-phosphate. Positions 82, 83, 134, 246, and 247 each coordinate glycerol. ADP contacts are provided by T268 and G312. ATP contacts are provided by T268, G312, Q316, and G413. 2 residues coordinate ADP: G413 and N417.

The protein belongs to the FGGY kinase family.

It carries out the reaction glycerol + ATP = sn-glycerol 3-phosphate + ADP + H(+). It participates in polyol metabolism; glycerol degradation via glycerol kinase pathway; sn-glycerol 3-phosphate from glycerol: step 1/1. Its activity is regulated as follows. Inhibited by fructose 1,6-bisphosphate (FBP). In terms of biological role, key enzyme in the regulation of glycerol uptake and metabolism. Catalyzes the phosphorylation of glycerol to yield sn-glycerol 3-phosphate. The polypeptide is Glycerol kinase (Saccharopolyspora erythraea (strain ATCC 11635 / DSM 40517 / JCM 4748 / NBRC 13426 / NCIMB 8594 / NRRL 2338)).